The chain runs to 133 residues: Vascular endothelial growth factor homolog (133 aa).

An N-terminal signal peptide occupies residues 1 to 20; sequence MKLLVGILVAVCLHQYLLNA. Disulfide bonds link cysteine 36–cysteine 78, cysteine 67–cysteine 112, and cysteine 71–cysteine 114. Asparagine 85 carries N-linked (GlcNAc...) asparagine; by host glycosylation.

The protein belongs to the PDGF/VEGF growth factor family. As to quaternary structure, homodimer; disulfide-linked.

Its subcellular location is the secreted. In terms of biological role, induces endothelial proliferation. The protein is Vascular endothelial growth factor homolog of Orf virus (strain NZ2) (OV NZ-2).